The sequence spans 395 residues: Protein maternal effect lethal 26 (395 aa).

In terms of domain architecture, MATH spans 41 to 162 (KVQHTWTVKN…RDMIIVNVEI (122 aa)). A BTB domain is found at 201 to 269 (CDFAINVNGK…IYCGRCNKDI (69 aa)).

As to quaternary structure, interacts (via BTB domain) with cul-3. Seems to be a component of a E3 ubiquitin-protein ligase complex containing cul-3. Interacts (probably via MATH domain) with mei-1, which targets mei-1 for ubiquitin-mediated proteolysis. Interacts (probably via MATH domain) with ppfr-1, the regulatory subunit of the PP4 complex; targets ppfr-1 for ubiquitin-mediated proteolysis. May interact (via MATH domain) with unc-89 (via Ig-like C2-type domain 2/3 and, Ig-like C2-type domain 50 and fibronectin type-III domain 2). In terms of tissue distribution, expressed in body wall muscles.

The protein localises to the cytoplasm. It is found in the myofibril. The protein resides in the sarcomere. Its subcellular location is the m line. It localises to the i band. Its pathway is protein modification; protein ubiquitination. Functionally, probable substrate-specific adapter of an E3 ubiquitin-protein ligase complex which mediates the ubiquitination and subsequent proteasomal degradation of target proteins. Controls degradation of microtubule severing protein mei-1 after meiosis. Controls degradation of ppfr-1, the regulatory subunit of PP4 complex, after meiosis. In body wall muscles, involved in the organization of myosin thick filaments, likely by regulating the degradation of mei-1 downstream of unc-89. May also activate the TORC1 pathway. This is Protein maternal effect lethal 26 (mel-26) from Caenorhabditis elegans.